The chain runs to 210 residues: Ras-related protein Rab-43 (210 aa).

Residue 23–30 coordinates GTP; that stretch reads GDASVGKT. The Effector region signature appears at 45–53; it reads QGSTIGVDF. A Phosphoserine modification is found at serine 47. 71–75 contacts GTP; sequence DTAGQ. Threonine 80 bears the Phosphothreonine mark. GTP is bound by residues 129 to 132 and 161 to 162; these read NKSD and AK. Residues cysteine 208 and cysteine 210 are each lipidated (S-geranylgeranyl cysteine). Cysteine 210 is modified (cysteine methyl ester).

It belongs to the small GTPase superfamily. Rab family. Interacts with GDI1, GDI2 and CHM; phosphorylation at Thr-80 disrupts these interactions.

Its subcellular location is the cytoplasmic vesicle. It localises to the phagosome. The protein resides in the phagosome membrane. It is found in the golgi apparatus. The protein localises to the trans-Golgi network membrane. Its subcellular location is the trans-Golgi network. The small GTPases Rab are key regulators of intracellular membrane trafficking, from the formation of transport vesicles to their fusion with membranes. Rabs cycle between an inactive GDP-bound form and an active GTP-bound form that is able to recruit to membranes different set of downstream effectors directly responsible for vesicle formation, movement, tethering and fusion. The low intrinsic GTPase activity of RAB43 is activated by USP6NL. Involved in retrograde transport from the endocytic pathway to the Golgi apparatus. Involved in the transport of Shiga toxin from early and recycling endosomes to the trans-Golgi network. Required for the structural integrity of the Golgi complex. Plays a role in the maturation of phagosomes that engulf pathogens, such as S.aureus and Mycobacterium. The polypeptide is Ras-related protein Rab-43 (Rab43) (Rattus norvegicus (Rat)).